The sequence spans 345 residues: Beta-2-glycoprotein 1 (345 aa).

The first 19 residues, 1-19, serve as a signal peptide directing secretion; that stretch reads MISLGLILFSSVLCHVATA. 4 Sushi domains span residues 21–81, 82–139, 140–202, and 203–262; these read RTCP…RCIP, RVCP…VCTR, VTCP…ECRE, and VKCP…SCKA. Intrachain disulfides connect C23/C66, C51/C79, C84/C124, C110/C137, C142/C188, C174/C200, C205/C248, C234/C260, C264/C315, C300/C325, and C307/C345. T33 carries O-linked (GalNAc...) threonine glycosylation. Residues N117, N162, N183, and N193 are each glycosylated (N-linked (GlcNAc...) asparagine). N253 carries an N-linked (GlcNAc...) asparagine glycan. A sushi-like region spans residues 263-345; the sequence is SCKLSVKKAT…KTDASDVKPC (83 aa).

As to expression, expressed by the liver and secreted in plasma.

It localises to the secreted. In terms of biological role, binds to various kinds of negatively charged substances such as heparin, phospholipids, and dextran sulfate. May prevent activation of the intrinsic blood coagulation cascade by binding to phospholipids on the surface of damaged cells. The chain is Beta-2-glycoprotein 1 (APOH) from Canis lupus familiaris (Dog).